Consider the following 521-residue polypeptide: Phospholipase C B (521 aa).

A signal peptide (tat-type signal) is located at residues 1–39 (MGSEHPVDGMTRRQFFAKAAAATTAGAFMSLAGPIIEKA). The segment at 501–521 (FPQSMPTQETAPTRGIPSGLC) is disordered.

This sequence belongs to the bacterial phospholipase C family. Predicted to be exported by the Tat system. The position of the signal peptide cleavage has not been experimentally proven.

It localises to the secreted. It is found in the cell wall. It carries out the reaction a 1,2-diacyl-sn-glycero-3-phosphocholine + H2O = phosphocholine + a 1,2-diacyl-sn-glycerol + H(+). In terms of biological role, involved in virulence. Induces cytotoxic effects on mouse macrophage cell lines, via direct or indirect enzymatic hydrolysis of cell membrane phospholipids. Hydrolyzes phosphatidylcholine. The polypeptide is Phospholipase C B (Mycobacterium tuberculosis (strain CDC 1551 / Oshkosh)).